Here is a 531-residue protein sequence, read N- to C-terminus: Beta-hexosaminidase subunit beta (531 aa).

A signal peptide spans 1–21 (MEVLPGLLRLLAALVVAERWA). A disulfide bridge links Cys67 with Cys111. 3 N-linked (GlcNAc...) asparagine glycosylation sites follow: Asn120, Asn164, and Asn301. Cystine bridges form between Cys283/Cys334 and Cys508/Cys525. Glu329 serves as the catalytic Proton donor.

The protein belongs to the glycosyl hydrolase 20 family. In terms of assembly, there are 3 forms of beta-hexosaminidase: hexosaminidase A is a heterodimer composed of one subunit alpha and one subunit beta (chain A and B); hexosaminidase B is a homodimer of two beta subunits (two chains A and B); hexosaminidase S is a homodimer of two alpha subunits. The composition of the dimer (isozyme A versus isozyme S) has a significant effect on the substrate specificity of the alpha subunit active site.

The protein resides in the lysosome. Its subcellular location is the cytoplasmic vesicle. It localises to the secretory vesicle. It is found in the cortical granule. The catalysed reaction is Hydrolysis of terminal non-reducing N-acetyl-D-hexosamine residues in N-acetyl-beta-D-hexosaminides.. It carries out the reaction N-acetyl-beta-D-galactosaminyl-(1-&gt;4)-beta-D-3-sulfogalactosyl-(1-&gt;4)-beta-D-glucosyl-(1&lt;-&gt;1')-ceramide + H2O = a beta-D-3-sulfogalactosyl-(1-&gt;4)-beta-D-glucosyl-(1&lt;-&gt;1')-ceramide + N-acetyl-beta-D-galactosamine. The enzyme catalyses a ganglioside GM2 (d18:1(4E)) + H2O = a ganglioside GM3 (d18:1(4E)) + N-acetyl-beta-D-galactosamine. It catalyses the reaction a ganglioside GM2 + H2O = a ganglioside GM3 + N-acetyl-beta-D-galactosamine. The catalysed reaction is beta-D-GalNAc-(1-&gt;4)-alpha-L-IdoA-(1-&gt;3)-beta-D-GalNAc-4-sulfate-(1-&gt;4)-alpha-L-IdoA-(1-&gt;3)-D-GalNAc-4-sulfate + H2O = alpha-L-IdoA-(1-&gt;3)-beta-D-GalNAc-4-sulfate-(1-&gt;4)-alpha-L-IdoA-(1-&gt;3)-D-GalNAc-4-sulfate + N-acetyl-D-galactosamine. It carries out the reaction N-acetyl-beta-D-6-sulfogalactosaminyl-(1-&gt;4)-alpha-L-iduronyl-(1-&gt;3)-N-acetyl-D-6-sulfogalactosamine + H2O = alpha-L-iduronyl-(1-&gt;3)-N-acetyl-D-6-sulfogalactosamine + N-acetyl-D-6-sulfogalactosamine. Addition of GM2A stimulates the hydrolysis of sulfated glycosphingolipid SM2 and the ganglioside GM2. Hydrolyzes the non-reducing end N-acetyl-D-hexosamine and/or sulfated N-acetyl-D-hexosamine of glycoconjugates, such as the oligosaccharide moieties from proteins and neutral glycolipids, or from certain mucopolysaccharides. The isozyme B does not hydrolyze each of these substrates, however hydrolyzes efficiently neutral oligosaccharide. Only the isozyme A is responsible for the degradation of GM2 gangliosides in the presence of GM2A. During fertilization is responsible, at least in part, for the zona block to polyspermy. Present in the cortical granules of non-activated oocytes, is exocytosed during the cortical reaction in response to oocyte activation and inactivates the sperm galactosyltransferase-binding site, accounting for the block in sperm binding to the zona pellucida. The sequence is that of Beta-hexosaminidase subunit beta from Sus scrofa (Pig).